The primary structure comprises 340 residues: Phosphoribosylformylglycinamidine cyclo-ligase (340 aa).

It belongs to the AIR synthase family.

The protein resides in the cytoplasm. It catalyses the reaction 2-formamido-N(1)-(5-O-phospho-beta-D-ribosyl)acetamidine + ATP = 5-amino-1-(5-phospho-beta-D-ribosyl)imidazole + ADP + phosphate + H(+). It functions in the pathway purine metabolism; IMP biosynthesis via de novo pathway; 5-amino-1-(5-phospho-D-ribosyl)imidazole from N(2)-formyl-N(1)-(5-phospho-D-ribosyl)glycinamide: step 2/2. In Streptococcus pyogenes serotype M12 (strain MGAS2096), this protein is Phosphoribosylformylglycinamidine cyclo-ligase.